We begin with the raw amino-acid sequence, 577 residues long: Arginine--tRNA ligase (577 aa).

The short motif at 122-132 (PNVAKEMHVGH) is the 'HIGH' region element.

The protein belongs to the class-I aminoacyl-tRNA synthetase family. In terms of assembly, monomer.

The protein resides in the cytoplasm. The catalysed reaction is tRNA(Arg) + L-arginine + ATP = L-arginyl-tRNA(Arg) + AMP + diphosphate. The chain is Arginine--tRNA ligase from Klebsiella pneumoniae (strain 342).